A 451-amino-acid chain; its full sequence is Tubulin gamma-1 chain (451 aa).

S131 carries the post-translational modification Phosphoserine; by BRSK1. 142–148 serves as a coordination point for GTP; it reads AGGTGSG.

It belongs to the tubulin family. Component of the gamma-tubulin ring complex (gTuRC) consisting of TUBGCP2, TUBGCP3, TUBGCP4, TUBGCP5 and TUBGCP6 and gamma-tubulin TUBG1 or TUBG2. TUBGCP2, TUBGCP3, TUBGCP4, TUBGCP5 and TUBGCP6 assemble in a 5:5:2:1:1 stoichiometry; each is associated with a gamma-tubulin, thereby arranging 14 gamma-tubulins in a helical manner. Gamma-tubulin at the first position is blocked by TUBGCP3 at the last position, allowing 13 protafilaments to grow into a microtubule. The gTuRC (via TUBGCP3 and TUBGCP6) interacts with ACTB and MZT1; the interactions form a luminal bridge that stabilizes the initial structure during complex assembly. The gTuRC (via TUBGCP2) interacts with MZT2A/MZT2B and CDK5RAP2 (via CM1 motif); the interactions play a role in gTuRC activation. Interacts with alpha-beta tubulin heterodimers; the interaction allows microtubules to nucleate from the gTuRC. Interacts with B9D2. Interacts with CDK5RAP2; the interaction is leading to centrosomal localization of TUBG1 and CDK5RAP2. Interacts with CIMAP3. Interacts with SAS6 and NUP62 at the centrosome. Interacts with EML3 (phosphorylated at 'Thr-881') and HAUS8. Interacts with DNM2; this interaction may participate in centrosome cohesion. Interacts with CCDC66. Phosphorylation at Ser-131 by BRSK1 regulates centrosome duplication, possibly by mediating relocation of gamma-tubulin and its associated proteins from the cytoplasm to the centrosome.

The protein localises to the cytoplasm. Its subcellular location is the cytoskeleton. It is found in the microtubule organizing center. The protein resides in the centrosome. It localises to the spindle. Tubulin is the major constituent of microtubules, protein filaments consisting of alpha- and beta-tubulin heterodimers. Gamma-tubulin is a key component of the gamma-tubulin ring complex (gTuRC) which mediates microtubule nucleation. The gTuRC regulates the minus-end nucleation of alpha-beta tubulin heterodimers that grow into microtubule protafilaments, a critical step in centrosome duplication and spindle formation. This is Tubulin gamma-1 chain from Bos taurus (Bovine).